We begin with the raw amino-acid sequence, 156 residues long: Small ribosomal subunit protein uS7 (156 aa).

Belongs to the universal ribosomal protein uS7 family. Part of the 30S ribosomal subunit. Contacts proteins S9 and S11.

In terms of biological role, one of the primary rRNA binding proteins, it binds directly to 16S rRNA where it nucleates assembly of the head domain of the 30S subunit. Is located at the subunit interface close to the decoding center, probably blocks exit of the E-site tRNA. This chain is Small ribosomal subunit protein uS7, found in Mycobacterium bovis (strain ATCC BAA-935 / AF2122/97).